A 550-amino-acid polypeptide reads, in one-letter code: Protein UshA (550 aa).

The first 25 residues, 1 to 25 (MKLLQRGVALALLTTFTLASETALA), serve as a signal peptide directing secretion. Zn(2+) contacts are provided by Asp-41, His-43, Asp-84, Asn-116, His-217, His-252, and Gln-254. A disulfide bridge links Cys-258 with Cys-275. Residues 375-379 (RDKVR) and 498-504 (FNATGGD) contribute to the substrate site.

This sequence belongs to the 5'-nucleotidase family. In terms of assembly, monomer. It depends on Zn(2+) as a cofactor.

The protein localises to the periplasm. It catalyses the reaction UDP-sugar + H2O = UMP + alpha-D-aldose 1-phosphate.. The enzyme catalyses a ribonucleoside 5'-phosphate + H2O = a ribonucleoside + phosphate. Its activity is regulated as follows. The activity of this protein is inhibited by an intracellular protein inhibitor. Its function is as follows. Degradation of external UDP-glucose to uridine monophosphate and glucose-1-phosphate, which can then be used by the cell. The chain is Protein UshA (ushA) from Escherichia coli (strain K12).